A 412-amino-acid polypeptide reads, in one-letter code: FAD-dependent monooxygenase nscC (412 aa).

Residues 1–21 (MAKPQATVLIIGAGISGLTTS) form the signal peptide. The FAD site is built by glutamate 35 and alanine 46. N-linked (GlcNAc...) asparagine glycosylation is present at asparagine 92. Arginine 119 is a binding site for FAD. Asparagine 170 and asparagine 231 each carry an N-linked (GlcNAc...) asparagine glycan. FAD contacts are provided by aspartate 326 and glycine 339.

This sequence belongs to the paxM FAD-dependent monooxygenase family. FAD serves as cofactor.

It participates in secondary metabolite biosynthesis. In terms of biological role, FAD-dependent monooxygenase; part of the gene cluster that mediates the biosynthesis of neosartoricin B, a prenylated anthracenone that probably exhibits T-cell antiproliferative activity, suggestive of a physiological role as an immunosuppressive agent. The non-reducing polyketide synthase nscA probably synthesizes and cyclizes the decaketide backbone. The hydrolase nscB then mediates the product release through hydrolysis followed by spontaneous decarboxylation. The prenyltransferase nscD catalyzes the addition of the dimethylallyl group to the aromatic C5. The FAD-dependent monooxygenase nscC is then responsible for the stereospecific hydroxylation at C2. Neosartoricin B can be converted into two additional compounds neosartoricins C and D. Neosartoricin C is a spirocyclic compound that is cyclized through the attack of C3 hydroxyl on C14, followed by dehydration. On the other hand, neosartoricin D is a further cyclized compound in which attack of C2 on C14 in neosartoricin C results in the formation of the acetal-containing dioxabicyclo-octanone ring. Both of these compounds are novel and possibly represent related metabolites of the gene cluster. In Arthroderma otae (strain ATCC MYA-4605 / CBS 113480) (Microsporum canis), this protein is FAD-dependent monooxygenase nscC.